The following is a 326-amino-acid chain: Vitamin B12 import system permease protein BtuC (326 aa).

The next 9 helical transmembrane spans lie at 15–35 (WLLC…CAGE), 61–81 (LAVL…QALF), 88–108 (PGLL…VLLG), 112–132 (LPNW…TLIL), 146–166 (LLAG…AIYF), 184–204 (GGVD…LLWI), 240–260 (GWMV…GLVI), 274–294 (VLLP…DIVA), and 302–322 (ELPI…WLLL).

This sequence belongs to the binding-protein-dependent transport system permease family. FecCD subfamily. The complex is composed of two ATP-binding proteins (BtuD), two transmembrane proteins (BtuC) and a solute-binding protein (BtuF).

It is found in the cell inner membrane. Part of the ABC transporter complex BtuCDF involved in vitamin B12 import. Involved in the translocation of the substrate across the membrane. This chain is Vitamin B12 import system permease protein BtuC, found in Escherichia coli O9:H4 (strain HS).